We begin with the raw amino-acid sequence, 217 residues long: Large ribosomal subunit protein uL4 (217 aa).

Residues 46–103 form a disordered region; the sequence is KRQGTHATKTRGMVSGGGRKPFRQKGTGRARQGSIRAPHFTGGGTVHGPQPRDYSQRT.

It belongs to the universal ribosomal protein uL4 family. As to quaternary structure, part of the 50S ribosomal subunit.

Functionally, one of the primary rRNA binding proteins, this protein initially binds near the 5'-end of the 23S rRNA. It is important during the early stages of 50S assembly. It makes multiple contacts with different domains of the 23S rRNA in the assembled 50S subunit and ribosome. In terms of biological role, forms part of the polypeptide exit tunnel. This Corynebacterium jeikeium (strain K411) protein is Large ribosomal subunit protein uL4.